The sequence spans 227 residues: Phosphatidylserine decarboxylase proenzyme (227 aa).

Serine 184 acts as the Schiff-base intermediate with substrate; via pyruvic acid in catalysis. Serine 184 is modified (pyruvic acid (Ser); by autocatalysis).

This sequence belongs to the phosphatidylserine decarboxylase family. PSD-A subfamily. In terms of assembly, heterodimer of a large membrane-associated beta subunit and a small pyruvoyl-containing alpha subunit. It depends on pyruvate as a cofactor. Is synthesized initially as an inactive proenzyme. Formation of the active enzyme involves a self-maturation process in which the active site pyruvoyl group is generated from an internal serine residue via an autocatalytic post-translational modification. Two non-identical subunits are generated from the proenzyme in this reaction, and the pyruvate is formed at the N-terminus of the alpha chain, which is derived from the carboxyl end of the proenzyme. The post-translation cleavage follows an unusual pathway, termed non-hydrolytic serinolysis, in which the side chain hydroxyl group of the serine supplies its oxygen atom to form the C-terminus of the beta chain, while the remainder of the serine residue undergoes an oxidative deamination to produce ammonia and the pyruvoyl prosthetic group on the alpha chain.

It is found in the cell membrane. It carries out the reaction a 1,2-diacyl-sn-glycero-3-phospho-L-serine + H(+) = a 1,2-diacyl-sn-glycero-3-phosphoethanolamine + CO2. The protein operates within phospholipid metabolism; phosphatidylethanolamine biosynthesis; phosphatidylethanolamine from CDP-diacylglycerol: step 2/2. Functionally, catalyzes the formation of phosphatidylethanolamine (PtdEtn) from phosphatidylserine (PtdSer). The protein is Phosphatidylserine decarboxylase proenzyme of Ehrlichia ruminantium (strain Gardel).